The primary structure comprises 573 residues: Sulfate adenylyltransferase (573 aa).

The interval 1–169 (MSNPPHGGVL…LEAVNKLQHY (169 aa)) is N-terminal. Residues 170–394 (DFVDLRYSPA…LRESHPPRSQ (225 aa)) are catalytic. Position 197 (Gln-197) interacts with sulfate. Residues 197-200 (QTRN) and 291-294 (GRDH) each bind ATP. Active-site residues include Thr-198, Arg-199, and Asn-200. Arg-199 contacts sulfate. Ala-295 lines the sulfate pocket. Residue Met-333 coordinates ATP. Positions 395 to 573 (QGFTVLFTGY…LESQGLLDRF (179 aa)) are allosteric regulation domain; adenylyl-sulfate kinase-like. 3'-phosphoadenylyl sulfate contacts are provided by residues 434-437 (ENIR), Arg-451, 477-478 (IA), and Arg-515.

In the N-terminal section; belongs to the sulfate adenylyltransferase family. It in the C-terminal section; belongs to the APS kinase family. Homohexamer. Dimer of trimers.

It is found in the cytoplasm. It catalyses the reaction sulfate + ATP + H(+) = adenosine 5'-phosphosulfate + diphosphate. It participates in sulfur metabolism; hydrogen sulfide biosynthesis; sulfite from sulfate: step 1/3. Allosterically inhibited by 3'-phosphoadenosine 5'-phosphosulfate (PAPS). In terms of biological role, catalyzes the first intracellular reaction of sulfate assimilation, forming adenosine-5'-phosphosulfate (APS) from inorganic sulfate and ATP. Plays an important role in sulfate activation as a component of the biosynthesis pathway of sulfur-containing amino acids. The polypeptide is Sulfate adenylyltransferase (cys-11) (Neurospora crassa (strain ATCC 24698 / 74-OR23-1A / CBS 708.71 / DSM 1257 / FGSC 987)).